The sequence spans 456 residues: Glycosyl hydrolase family 109 protein 2 (456 aa).

A signal peptide (tat-type signal) is located at residues 1-33; that stretch reads MSGFDRRSFLKASMVTAAATALAACASSERATG. NAD(+) contacts are provided by residues 63–64, Asp85, 134–137, 154–155, and Asn183; these read ER, WAWH, and EV. Substrate contacts are provided by residues Tyr212, Arg231, 243–246, and Tyr325; that span reads YPTH. Tyr243 is a binding site for NAD(+).

Belongs to the Gfo/Idh/MocA family. Glycosyl hydrolase 109 subfamily. Requires NAD(+) as cofactor. Predicted to be exported by the Tat system. The position of the signal peptide cleavage has not been experimentally proven.

Its function is as follows. Glycosidase. This is Glycosyl hydrolase family 109 protein 2 from Shewanella sp. (strain MR-4).